We begin with the raw amino-acid sequence, 549 residues long: TBC1 domain family member 3B (549 aa).

Positions 101-293 constitute a Rab-GAP TBC domain; the sequence is GMPMNIRGPM…RLWDVYLVEG (193 aa). 2 S-palmitoyl cysteine lipidation sites follow: C318 and C325. The segment at 350 to 426 is disordered; that stretch reads LTRKQGDLPP…PGGAVREDTY (77 aa). The segment covering 398–417 has biased composition (low complexity); the sequence is PRPIWSASPPRAPRSSTPCP.

Ubiquitinated by a CUL7-based E3 ligase, which leads to proteasomal degradation. In terms of processing, palmitoylation is required for membrane localization and protects TBC1D3 from ubiquitination.

Its subcellular location is the cell membrane. Acts as a GTPase activating protein for RAB5. Does not act on RAB4 or RAB11. This Homo sapiens (Human) protein is TBC1 domain family member 3B (TBC1D3B).